The following is a 349-amino-acid chain: MSKIRVLSVDDSALMRQIMTEIINSHSDMEMVATAPDPLVARDLIKKFNPDVLTLDVEMPRMDGLDFLEKLMRLRPMPVVMVSSLTGKGSEVTLRALELGAIDFVTKPQLGIREGMLAYNEMIAEKVRTAAKASLAAHKPLSAPTTLKAGPLLSSEKLIAIGASTGGTEAIRHVLQPLPLSSPALLITQHMPPGFTRSFADRLNKLCQIGVKEAEDGERVLPGHAYIAPGDRHMELSRSGANYQIKIHDGPAVNRHRPSVDVLFHSVAKQAGRNAVGVILTGMGNDGAAGMLAMRQAGAWTLAQNEASCVVFGMPREAINMGGVCEVVDLSQVSQQMLAKISAGQAIRI.

The Response regulatory domain occupies 5–122 (RVLSVDDSAL…REGMLAYNEM (118 aa)). Asp56 is subject to 4-aspartylphosphate. The CheB-type methylesterase domain occupies 152–344 (LLSSEKLIAI…QQMLAKISAG (193 aa)). Active-site residues include Ser164, His190, and Asp286.

Belongs to the CheB family. Interacts with CheA. Binds to a C-terminal pentapeptide sequence carried by certain receptors. In terms of processing, phosphorylated by CheA. Phosphorylation of the N-terminal regulatory domain activates the methylesterase activity.

The protein localises to the cytoplasm. It catalyses the reaction [protein]-L-glutamate 5-O-methyl ester + H2O = L-glutamyl-[protein] + methanol + H(+). The catalysed reaction is L-glutaminyl-[protein] + H2O = L-glutamyl-[protein] + NH4(+). With respect to regulation, methylesterase activity is activated via phosphorylation in response to negative chemotactic stimuli and is inhibited in the presence of attractants. Activation requires both CheA and CheW. Involved in chemotaxis. Part of a chemotaxis signal transduction system that modulates chemotaxis in response to various stimuli. Catalyzes the demethylation of specific methylglutamate residues introduced into the chemoreceptors (methyl-accepting chemotaxis proteins or MCP) by CheR. Also mediates the irreversible deamidation of specific glutamine residues to glutamic acid. Catalyzes its own deactivation by removing the activating phosphoryl group. The sequence is that of Protein-glutamate methylesterase/protein-glutamine glutaminase from Escherichia coli (strain K12).